Consider the following 366-residue polypeptide: 1-aminocyclopropane-1-carboxylate oxidase homolog 12 (366 aa).

Residues 215–314 (KTLLMICHYY…RISVASFFSS (100 aa)) form the Fe2OG dioxygenase domain. Positions 239, 241, and 295 each coordinate Fe cation. Arg-305 is a 2-oxoglutarate binding site.

It belongs to the iron/ascorbate-dependent oxidoreductase family. Fe(2+) serves as cofactor.

The protein is 1-aminocyclopropane-1-carboxylate oxidase homolog 12 of Arabidopsis thaliana (Mouse-ear cress).